Reading from the N-terminus, the 127-residue chain is uncharacterized protein (127 aa).

Residues 1–16 form the signal peptide; the sequence is MLKKIIFGITISLTTG. Cys17 is lipidated: N-palmitoyl cysteine. Cys17 is lipidated: S-diacylglycerol cysteine. Positions 56-101 form a coiled coil; the sequence is EVREEIQKYRVEIVDINKKKRELYNRLSKEAQSFLAEQQKYKQKLS. The segment at 102–127 is disordered; it reads IPKLLIENDPKNNTANSKDNNDKDMK.

The protein resides in the cell membrane. This is an uncharacterized protein from Rickettsia prowazekii (strain Madrid E).